Consider the following 1082-residue polypeptide: Mediator of RNA polymerase II transcription subunit 14 (1082 aa).

Disordered stretches follow at residues 1-80 (MTTT…APPP) and 319-343 (EATS…NLPL). N-acetylthreonine is present on Thr-2. A Phosphoserine modification is found at Ser-7. A compositionally biased stretch (basic and acidic residues) spans 13–28 (NEERLSNEMHALKNRS). Positions 29 to 59 (EQNGQEQQGPVKNTQLHGPSATDPETTATQK) are enriched in polar residues. Low complexity predominate over residues 321–340 (TSTNGDSENNEENSSSNGNN). Thr-1036 carries the post-translational modification Phosphothreonine.

The protein belongs to the Mediator complex subunit 14 family. In terms of assembly, component of the Mediator complex, which is composed of at least 21 subunits that form three structurally distinct submodules. The Mediator head module contains MED6, MED8, MED11, SRB4/MED17, SRB5/MED18, ROX3/MED19, SRB2/MED20 and SRB6/MED22, the middle module contains MED1, MED4, NUT1/MED5, MED7, CSE2/MED9, NUT2/MED10, SRB7/MED21 and SOH1/MED31, and the tail module contains MED2, PGD1/MED3, RGR1/MED14, GAL11/MED15 and SIN4/MED16. The head and the middle modules interact directly with RNA polymerase II, whereas the elongated tail module interacts with gene-specific regulatory proteins.

The protein resides in the nucleus. In terms of biological role, component of the Mediator complex, a coactivator involved in the regulated transcription of nearly all RNA polymerase II-dependent genes. Mediator functions as a bridge to convey information from gene-specific regulatory proteins to the basal RNA polymerase II transcription machinery. The Mediator complex, having a compact conformation in its free form, is recruited to promoters by direct interactions with regulatory proteins and serves for the assembly of a functional preinitiation complex with RNA polymerase II and the general transcription factors. The Mediator complex unfolds to an extended conformation and partially surrounds RNA polymerase II, specifically interacting with the unphosphorylated form of the C-terminal domain (CTD) of RNA polymerase II. The Mediator complex dissociates from the RNA polymerase II holoenzyme and stays at the promoter when transcriptional elongation begins. This is Mediator of RNA polymerase II transcription subunit 14 (RGR1) from Saccharomyces cerevisiae (strain ATCC 204508 / S288c) (Baker's yeast).